We begin with the raw amino-acid sequence, 267 residues long: Tryptophan synthase alpha chain (267 aa).

Catalysis depends on proton acceptor residues Glu49 and Asp60.

Belongs to the TrpA family. As to quaternary structure, tetramer of two alpha and two beta chains.

It catalyses the reaction (1S,2R)-1-C-(indol-3-yl)glycerol 3-phosphate + L-serine = D-glyceraldehyde 3-phosphate + L-tryptophan + H2O. It functions in the pathway amino-acid biosynthesis; L-tryptophan biosynthesis; L-tryptophan from chorismate: step 5/5. In terms of biological role, the alpha subunit is responsible for the aldol cleavage of indoleglycerol phosphate to indole and glyceraldehyde 3-phosphate. In Solibacter usitatus (strain Ellin6076), this protein is Tryptophan synthase alpha chain.